The following is a 429-amino-acid chain: MYVEIVDVRAREVLDSRGNPTVEAEVVLEDGTMGRAIVPSGASTGKFEALEIRDKDKKRYLGKGVLKAVENVNETIAPALIGMNAFDQPLVDKTLIELDGTENKSKLGANAILAVSMAVARAAANYLGLPLYKYLGGVNAKVLPVPLMNVINGGQHADNNLDLQEFMIVPAGFDSFREALRAGAEIFHTLKKILHEAGHVTAVGDEGGFAPNLSSNEEAIKVLIEAIEKAGYKPGEEVFIALDCAASSFYDEEKGVYYVDGEEKSSEVLMGYYEELVAKYPIISIEDPFAEEDWDAFVEFTKRVGNKVQIVGDDLYVTNVKRLSKGIELKATNSILIKLNQIGTVTETLDAVEMAQKNNMTAIISHRSGESEDTFIADLAVATNAGFIKTGSLSRSERIAKYNQLLRIEEELGKVAEFRGLKSFYSIKR.

Gln164 is a (2R)-2-phosphoglycerate binding site. Glu206 (proton donor) is an active-site residue. 3 residues coordinate Mg(2+): Asp243, Glu286, and Asp313. (2R)-2-phosphoglycerate contacts are provided by Lys338, Arg367, Ser368, and Lys389. The active-site Proton acceptor is Lys338.

The protein belongs to the enolase family. Homooctamer. Forms a ring-shaped particle. Mg(2+) is required as a cofactor.

It localises to the cytoplasm. The protein localises to the secreted. Its subcellular location is the cell surface. The enzyme catalyses (2R)-2-phosphoglycerate = phosphoenolpyruvate + H2O. It participates in carbohydrate degradation; glycolysis; pyruvate from D-glyceraldehyde 3-phosphate: step 4/5. Inhibited by fluoride and phosphate. Catalyzes the reversible conversion of 2-phosphoglycerate (2-PG) into phosphoenolpyruvate (PEP). It is essential for the degradation of carbohydrates via glycolysis. The chain is Enolase from Thermotoga maritima (strain ATCC 43589 / DSM 3109 / JCM 10099 / NBRC 100826 / MSB8).